Here is a 192-residue protein sequence, read N- to C-terminus: Phosphoheptose isomerase (192 aa).

In terms of domain architecture, SIS spans Leu37–Lys192. Asn52–Gly54 contributes to the substrate binding site. Zn(2+) is bound by residues His61 and Glu65. Residues Glu65, Asn93–Asp94, Ser119–Ser121, Ser124, and Gln172 contribute to the substrate site. 2 residues coordinate Zn(2+): Gln172 and His180.

Belongs to the SIS family. GmhA subfamily. Homotetramer. Zn(2+) is required as a cofactor.

The protein resides in the cytoplasm. The catalysed reaction is 2 D-sedoheptulose 7-phosphate = D-glycero-alpha-D-manno-heptose 7-phosphate + D-glycero-beta-D-manno-heptose 7-phosphate. Its pathway is carbohydrate biosynthesis; D-glycero-D-manno-heptose 7-phosphate biosynthesis; D-glycero-alpha-D-manno-heptose 7-phosphate and D-glycero-beta-D-manno-heptose 7-phosphate from sedoheptulose 7-phosphate: step 1/1. In terms of biological role, catalyzes the isomerization of sedoheptulose 7-phosphate in D-glycero-D-manno-heptose 7-phosphate. This Salmonella agona (strain SL483) protein is Phosphoheptose isomerase.